A 272-amino-acid chain; its full sequence is 3-methyl-2-oxobutanoate hydroxymethyltransferase (272 aa).

2 residues coordinate Mg(2+): Asp52 and Asp91. 3-methyl-2-oxobutanoate contacts are provided by residues 52–53 (DS), Asp91, and Lys121. Glu123 is a Mg(2+) binding site. The active-site Proton acceptor is the Glu190.

Belongs to the PanB family. Homodecamer; pentamer of dimers. Mg(2+) serves as cofactor.

It localises to the cytoplasm. It carries out the reaction 3-methyl-2-oxobutanoate + (6R)-5,10-methylene-5,6,7,8-tetrahydrofolate + H2O = 2-dehydropantoate + (6S)-5,6,7,8-tetrahydrofolate. Its pathway is cofactor biosynthesis; (R)-pantothenate biosynthesis; (R)-pantoate from 3-methyl-2-oxobutanoate: step 1/2. Catalyzes the reversible reaction in which hydroxymethyl group from 5,10-methylenetetrahydrofolate is transferred onto alpha-ketoisovalerate to form ketopantoate. The sequence is that of 3-methyl-2-oxobutanoate hydroxymethyltransferase from Cytophaga hutchinsonii (strain ATCC 33406 / DSM 1761 / CIP 103989 / NBRC 15051 / NCIMB 9469 / D465).